Reading from the N-terminus, the 121-residue chain is Small ribosomal subunit protein uS13 (121 aa).

The disordered stretch occupies residues 97 to 121 (VRGQRTRTNARTRRGARKTVAGRKK). Positions 100-121 (QRTRTNARTRRGARKTVAGRKK) are enriched in basic residues.

It belongs to the universal ribosomal protein uS13 family. In terms of assembly, part of the 30S ribosomal subunit. Forms a loose heterodimer with protein S19. Forms two bridges to the 50S subunit in the 70S ribosome.

Located at the top of the head of the 30S subunit, it contacts several helices of the 16S rRNA. In the 70S ribosome it contacts the 23S rRNA (bridge B1a) and protein L5 of the 50S subunit (bridge B1b), connecting the 2 subunits; these bridges are implicated in subunit movement. Contacts the tRNAs in the A and P-sites. This Prochlorococcus marinus (strain NATL2A) protein is Small ribosomal subunit protein uS13.